The sequence spans 283 residues: E3 ubiquitin-protein ligase MARCHF5 (283 aa).

An RING-CH-type zinc finger spans residues 9–78 (VQQMLDRSCW…PQCNAEYLIV (70 aa)). Positions 17, 20, 36, 38, 46, 49, 68, and 71 each coordinate Zn(2+). 4 helical membrane passes run 102–122 (FAAAGIMVGSIYWTAVTYGAV), 142–162 (PLFLLIGLPTIPVVLILGKMI), 212–232 (ILCGALVFPTIATIVGKLMFS), and 241–261 (TILGGIAFVAIKGAFKVYFKQ).

Its subcellular location is the mitochondrion outer membrane. The protein localises to the endoplasmic reticulum membrane. The enzyme catalyses S-ubiquitinyl-[E2 ubiquitin-conjugating enzyme]-L-cysteine + [acceptor protein]-L-lysine = [E2 ubiquitin-conjugating enzyme]-L-cysteine + N(6)-ubiquitinyl-[acceptor protein]-L-lysine.. The protein operates within protein modification; protein ubiquitination. Functionally, mitochondrial E3 ubiquitin-protein ligase that plays a crucial role in the control of mitochondrial morphology by acting as a positive regulator of mitochondrial fission. May play a role in the prevention of cell senescence acting as a regulator of mitochondrial quality control. In Xenopus laevis (African clawed frog), this protein is E3 ubiquitin-protein ligase MARCHF5 (marchf5).